Consider the following 226-residue polypeptide: 2-C-methyl-D-erythritol 4-phosphate cytidylyltransferase (226 aa).

This sequence belongs to the IspD/TarI cytidylyltransferase family. IspD subfamily.

The catalysed reaction is 2-C-methyl-D-erythritol 4-phosphate + CTP + H(+) = 4-CDP-2-C-methyl-D-erythritol + diphosphate. The protein operates within isoprenoid biosynthesis; isopentenyl diphosphate biosynthesis via DXP pathway; isopentenyl diphosphate from 1-deoxy-D-xylulose 5-phosphate: step 2/6. Functionally, catalyzes the formation of 4-diphosphocytidyl-2-C-methyl-D-erythritol from CTP and 2-C-methyl-D-erythritol 4-phosphate (MEP). The sequence is that of 2-C-methyl-D-erythritol 4-phosphate cytidylyltransferase from Prochlorococcus marinus (strain MIT 9312).